The chain runs to 230 residues: Spliceosome-associated protein CWC15 homolog (230 aa).

2 disordered regions span residues 1 to 157 (MTTA…EEKQ) and 164 to 183 (AGNP…GGDF). Over residues 25–34 (KLSNQYSSKD) the composition is skewed to polar residues. Coiled-coil stretches lie at residues 47-82 (GQET…SASS) and 119-164 (DSDE…NILA). Residues 52 to 78 (ADLRKKDLRRELEDKERNAIREKRARD) are compositionally biased toward basic and acidic residues. Over residues 104–125 (DADEAVDELNSSDDDDSDEDDT) the composition is skewed to acidic residues. A compositionally biased stretch (basic and acidic residues) spans 131–157 (ELEKIKKERAEEKAARDEEIKEKEEKQ).

This sequence belongs to the CWC15 family. As to quaternary structure, component of spliceosomal complex.

Its subcellular location is the nucleus. Component of a spliceosomal complex that is required for activating pre-mRNA splicing. The chain is Spliceosome-associated protein CWC15 homolog from Caenorhabditis elegans.